The chain runs to 224 residues: Cysteine-rich hydrophobic domain-containing protein 1 (224 aa).

The segment at 1–80 (MSILLPNMAE…PPPRVVSEEH (80 aa)) is disordered. Residues 13 to 25 (TISELEEEEEEEA) show a composition bias toward acidic residues. Low complexity predominate over residues 26 to 40 (ATSSSSPSSSSSVSG). A compositionally biased stretch (acidic residues) spans 41–69 (PDDDEEDEEEEEEEEEEEEEEEEEEEEEA). Residues 42-70 (DDDEEDEEEEEEEEEEEEEEEEEEEEEAP) adopt a coiled-coil conformation.

The protein belongs to the CHIC family. Post-translationally, palmitoylated. As to expression, equally expressed in various parts of the brain.

It is found in the cell membrane. Its subcellular location is the cytoplasmic vesicle. The sequence is that of Cysteine-rich hydrophobic domain-containing protein 1 (CHIC1) from Homo sapiens (Human).